The primary structure comprises 902 residues: Protein translocase subunit SecA (902 aa).

Residues Q87, 105-109 (GEGKT), and D512 contribute to the ATP site. Positions 851-902 (LARQQQLSHQAPVEELTQGSAAAAQEGRKVGRNDPCPCGSGKKFKHCHGKLQ) are disordered. Residues C886, C888, C897, and H898 each contribute to the Zn(2+) site. The span at 892–902 (KKFKHCHGKLQ) shows a compositional bias: basic residues.

The protein belongs to the SecA family. In terms of assembly, monomer and homodimer. Part of the essential Sec protein translocation apparatus which comprises SecA, SecYEG and auxiliary proteins SecDF-YajC and YidC. The cofactor is Zn(2+).

The protein localises to the cell inner membrane. Its subcellular location is the cytoplasm. The enzyme catalyses ATP + H2O + cellular proteinSide 1 = ADP + phosphate + cellular proteinSide 2.. Its function is as follows. Part of the Sec protein translocase complex. Interacts with the SecYEG preprotein conducting channel. Has a central role in coupling the hydrolysis of ATP to the transfer of proteins into and across the cell membrane, serving both as a receptor for the preprotein-SecB complex and as an ATP-driven molecular motor driving the stepwise translocation of polypeptide chains across the membrane. In Sodalis glossinidius (strain morsitans), this protein is Protein translocase subunit SecA.